We begin with the raw amino-acid sequence, 423 residues long: Glycine amidinotransferase, mitochondrial (423 aa).

A mitochondrion-targeting transit peptide spans 1 to 43 (MLRVRCLRGGSRGAEAVHYIGSRLGRTLTGWVQRTFQSTQAAT). Phosphoserine occurs at positions 46 and 49. Asp170 provides a ligand contact to arginine. Residues Asp254 and His303 contribute to the active site. Positions 305, 322, 354, and 355 each coordinate arginine. Lys385 is modified (N6-acetyllysine). Cys407 acts as the Amidino-cysteine intermediate in catalysis.

Belongs to the amidinotransferase family. In terms of assembly, homodimer. There is an equilibrium between the monomeric and dimeric forms, shifted towards the side of the monomer. As to expression, expressed in brain, heart, kidney, liver, lung, salivary gland and skeletal muscle tissue, with the highest expression in kidney. Biallelically expressed in placenta and fetal tissues.

It is found in the mitochondrion inner membrane. The protein resides in the cytoplasm. The catalysed reaction is L-arginine + glycine = guanidinoacetate + L-ornithine. The enzyme catalyses 4-aminobutanoate + L-arginine = 4-guanidinobutanoate + L-ornithine. It catalyses the reaction beta-alanine + L-arginine = 3-guanidinopropanoate + L-ornithine. It carries out the reaction taurine + L-arginine = taurocyamine + L-ornithine. It functions in the pathway amine and polyamine biosynthesis; creatine biosynthesis; creatine from L-arginine and glycine: step 1/2. Its function is as follows. Transamidinase that catalyzes the transfer of the amidino group of L-arginine onto the amino moiety of acceptor metabolites such as glycine, beta-alanine, gamma-aminobutyric acid (GABA) and taurine yielding the corresponding guanidine derivatives. Catalyzes the rate-limiting step of creatine biosynthesis, namely the transfer of the amidino group from L-arginine to glycine to generate guanidinoacetate, which is then methylated by GAMT to form creatine. Provides creatine as a source for ATP generation in tissues with high energy demands, in particular skeletal muscle, heart and brain. The protein is Glycine amidinotransferase, mitochondrial (GATM) of Homo sapiens (Human).